We begin with the raw amino-acid sequence, 60 residues long: Large ribosomal subunit protein bL32 (60 aa).

The protein belongs to the bacterial ribosomal protein bL32 family.

The chain is Large ribosomal subunit protein bL32 from Kosmotoga olearia (strain ATCC BAA-1733 / DSM 21960 / TBF 19.5.1).